Here is a 253-residue protein sequence, read N- to C-terminus: Phycoerythrobilin:ferredoxin oxidoreductase (253 aa).

The protein belongs to the HY2 family.

It carries out the reaction (3Z)-phycoerythrobilin + oxidized 2[4Fe-4S]-[ferredoxin] = 15,16-dihydrobiliverdin + reduced 2[4Fe-4S]-[ferredoxin] + 2 H(+). Functionally, catalyzes the two-electron reduction of the C2 and C3(1) diene system of 15,16-dihydrobiliverdin. The sequence is that of Phycoerythrobilin:ferredoxin oxidoreductase from Prochlorococcus marinus (strain AS9601).